Reading from the N-terminus, the 791-residue chain is uncharacterized protein (791 aa).

A helical membrane pass occupies residues 10–30 (LLTITIGAVAVSSILLGGIFY). Positions 56 to 76 (NLDYQKARPSIKDNNLKEIPK) are enriched in basic and acidic residues. The tract at residues 56 to 175 (NLDYQKARPS…PQPQQIPNQS (120 aa)) is disordered. Residues 77 to 97 (PKPQPKPEPQPTPFPDPIPTP) are compositionally biased toward pro residues. Over residues 98–124 (PKKEELKKPEIKPEEPKKPEIKPEPIP) the composition is skewed to basic and acidic residues. Over residues 125–139 (KPKPQPIPQPTPPVE) the composition is skewed to pro residues.

The protein to U.parvum UU044.

It localises to the membrane. This is an uncharacterized protein from Ureaplasma parvum serovar 3 (strain ATCC 700970).